A 185-amino-acid chain; its full sequence is Large ribosomal subunit protein uL22 (185 aa).

The tract at residues V160 to E185 is disordered.

The protein belongs to the universal ribosomal protein uL22 family.

The polypeptide is Large ribosomal subunit protein uL22 (RpL17) (Maconellicoccus hirsutus (Pink hibiscus mealybug)).